Consider the following 942-residue polypeptide: MMTATEIRQSFLDFFREKQHTVVPSASLMPQSPGLLFTNAGMNQFVPYFLGVWTPPWTPARATDTQKCIRAGGKHNDLEDVGYDSYHHTFFEMLGNWSFGDYFKREAIRWAWELVVERWGFPAERLYATVYAPDKSKGDPGEFDREAWDFWAELFRSRGLDPDVHIVHGNVKDNFWMMGETGPCGPCSELHVDLTPEGNTKGSLVNKDSDQCIEIWNLVFIQYNAESDGSMRNLPACHVDTGMGFERACSIMQCTNGFKDFSRKPSNYATDVFRPLFDRLEVLSGRKYADVYPAPGSKRVDAEDGTLQEAIAFRVIADHLRTLSFSIADGILPGNNGRNYVLRRILRRAVRYGRRLGFTQPFLAELVDTLVESFGQVFPELAARATTVKEVLNREEASFNETLDRGLELFDAETASAGKVSGEFAFKLYDTYGFPIDLTALLAEERGLDIDMERFNRLMEEQRERARAARKSEVVRALDLKTDAVTEFTGYDVDECAATVLEVSRQGDSLFIITDKTPFYAEMGGQVSDAGLIEIGGESYHVMAVQQIGNARAHVVEARPGLEVKPGDRVHLSIDAERRRRIEAHHTATHLLHCALHQVVSPDAAQQGSFVSEDRLRFDFNSSAVSPDQLRLIEEKVNGWIEESLPVHCTERAYADVKGNAAIAQFFGDKYGDVVRVVQVGGCRDGLDGVSMEFCGGTHIANTKNIGLFKIKSEGAIASGVRRIEAMTGDAALEMIRQHVVAKSLEIAKAVEKIKEVNYELADMGLEQVPVPTIEGKPGLTALGASDIRTVNDSLARFDASVEHFKQTALDAEKKLKKARAGQSAAKADALLNEWLSDAPSSLIQVAEGAGELLQELLNGLKKRQYAGAAFLLCVDSSSLLLGAYCGKDAIADGLSAGDMIREVAALAGGKGGGRADQARGSAPQDADPQALAAAARNIING.

The Zn(2+) site is built by H586, H590, C695, and H699.

Belongs to the class-II aminoacyl-tRNA synthetase family. The cofactor is Zn(2+).

The protein resides in the cytoplasm. The enzyme catalyses tRNA(Ala) + L-alanine + ATP = L-alanyl-tRNA(Ala) + AMP + diphosphate. Catalyzes the attachment of alanine to tRNA(Ala) in a two-step reaction: alanine is first activated by ATP to form Ala-AMP and then transferred to the acceptor end of tRNA(Ala). Also edits incorrectly charged Ser-tRNA(Ala) and Gly-tRNA(Ala) via its editing domain. In Akkermansia muciniphila (strain ATCC BAA-835 / DSM 22959 / JCM 33894 / BCRC 81048 / CCUG 64013 / CIP 107961 / Muc), this protein is Alanine--tRNA ligase.